Here is a 495-residue protein sequence, read N- to C-terminus: UDP-N-acetylmuramoyl-L-alanyl-D-glutamate--2,6-diaminopimelate ligase (495 aa).

Ser-29 serves as a coordination point for UDP-N-acetyl-alpha-D-muramoyl-L-alanyl-D-glutamate. 111 to 117 (GTNGKTS) is an ATP binding site. Residues 153–154 (TT), Ser-180, Gln-186, and Arg-188 contribute to the UDP-N-acetyl-alpha-D-muramoyl-L-alanyl-D-glutamate site. Lys-220 is modified (N6-carboxylysine). Meso-2,6-diaminopimelate-binding positions include Arg-384, 408–411 (DNPR), Gly-459, and Glu-463. A Meso-diaminopimelate recognition motif motif is present at residues 408–411 (DNPR).

It belongs to the MurCDEF family. MurE subfamily. Mg(2+) serves as cofactor. Carboxylation is probably crucial for Mg(2+) binding and, consequently, for the gamma-phosphate positioning of ATP.

The protein resides in the cytoplasm. It catalyses the reaction UDP-N-acetyl-alpha-D-muramoyl-L-alanyl-D-glutamate + meso-2,6-diaminopimelate + ATP = UDP-N-acetyl-alpha-D-muramoyl-L-alanyl-gamma-D-glutamyl-meso-2,6-diaminopimelate + ADP + phosphate + H(+). Its pathway is cell wall biogenesis; peptidoglycan biosynthesis. In terms of biological role, catalyzes the addition of meso-diaminopimelic acid to the nucleotide precursor UDP-N-acetylmuramoyl-L-alanyl-D-glutamate (UMAG) in the biosynthesis of bacterial cell-wall peptidoglycan. This chain is UDP-N-acetylmuramoyl-L-alanyl-D-glutamate--2,6-diaminopimelate ligase, found in Xylella fastidiosa (strain Temecula1 / ATCC 700964).